The primary structure comprises 85 residues: U4-theraphotoxin-Hhn1l (85 aa).

Residues 1–22 (MKVTLIAFLTCAAVLVLHTTAA) form the signal peptide. Positions 23-48 (EELEAESQLMGVGMPDTELAAVDEER) are excised as a propeptide. Intrachain disulfides connect C52–C66, C56–C77, and C71–C82.

The protein belongs to the neurotoxin 12 (Hwtx-2) family. 02 (Hwtx-2) subfamily. As to expression, expressed by the venom gland.

Its subcellular location is the secreted. Functionally, postsynaptic neurotoxin. This Cyriopagopus hainanus (Chinese bird spider) protein is U4-theraphotoxin-Hhn1l.